The chain runs to 210 residues: Cytochrome c biogenesis ATP-binding export protein CcmA (210 aa).

The ABC transporter domain occupies 1 to 208 (MHLNQLVISH…KVRTLSLDQF (208 aa)). 38 to 45 (GHNGIGKT) lines the ATP pocket.

It belongs to the ABC transporter superfamily. CcmA exporter (TC 3.A.1.107) family. As to quaternary structure, the complex is composed of two ATP-binding proteins (CcmA) and two transmembrane proteins (CcmB).

It localises to the cell inner membrane. The enzyme catalyses heme b(in) + ATP + H2O = heme b(out) + ADP + phosphate + H(+). Part of the ABC transporter complex CcmAB involved in the biogenesis of c-type cytochromes; once thought to export heme, this seems not to be the case, but its exact role is uncertain. Responsible for energy coupling to the transport system. This Haemophilus ducreyi (strain 35000HP / ATCC 700724) protein is Cytochrome c biogenesis ATP-binding export protein CcmA.